The sequence spans 543 residues: Hydroxylamine reductase (543 aa).

C5, C8, C17, and C23 together coordinate [4Fe-4S] cluster. Positions 236, 260, 304, 398, 426, 451, 486, and 488 each coordinate hybrid [4Fe-2O-2S] cluster. A Cysteine persulfide modification is found at C398.

Belongs to the HCP family. [4Fe-4S] cluster is required as a cofactor. The cofactor is hybrid [4Fe-2O-2S] cluster.

The protein resides in the cytoplasm. The enzyme catalyses A + NH4(+) + H2O = hydroxylamine + AH2 + H(+). In terms of biological role, catalyzes the reduction of hydroxylamine to form NH(3) and H(2)O. The polypeptide is Hydroxylamine reductase (Bacteroides fragilis (strain ATCC 25285 / DSM 2151 / CCUG 4856 / JCM 11019 / LMG 10263 / NCTC 9343 / Onslow / VPI 2553 / EN-2)).